Reading from the N-terminus, the 390-residue chain is Zinc finger protein 121 (390 aa).

Residues 88-110 (FEYSDCEEAFVDQSHLQANRITH) form a C2H2-type 1; degenerate zinc finger. The segment at 116–138 (YEQKQCGRAFTYSTSHAVSVKMH) adopts a C2H2-type 2; degenerate zinc-finger fold. 9 C2H2-type zinc fingers span residues 144–166 (YECK…MRTH), 172–194 (YECK…VRIH), 200–222 (YQCK…VRIH), 228–250 (YECN…FKTH), 256–278 (FECK…FRIH), 284–306 (YKCK…VKIH), 312–334 (YECK…IRTH), 340–362 (YICK…VRIH), and 368–390 (YICN…LKTH).

Belongs to the krueppel C2H2-type zinc-finger protein family.

The protein localises to the nucleus. May be involved in transcriptional regulation. This is Zinc finger protein 121 (ZNF121) from Homo sapiens (Human).